The primary structure comprises 449 residues: Phosphoglucosamine mutase (449 aa).

The active-site Phosphoserine intermediate is the serine 102. Mg(2+) contacts are provided by serine 102, aspartate 241, aspartate 243, and aspartate 245. Position 102 is a phosphoserine (serine 102).

It belongs to the phosphohexose mutase family. Mg(2+) serves as cofactor. Activated by phosphorylation.

It catalyses the reaction alpha-D-glucosamine 1-phosphate = D-glucosamine 6-phosphate. In terms of biological role, catalyzes the conversion of glucosamine-6-phosphate to glucosamine-1-phosphate. This is Phosphoglucosamine mutase from Pseudoalteromonas translucida (strain TAC 125).